Consider the following 89-residue polypeptide: Small ribosomal subunit protein uS17 (89 aa).

Belongs to the universal ribosomal protein uS17 family. Part of the 30S ribosomal subunit.

Its function is as follows. One of the primary rRNA binding proteins, it binds specifically to the 5'-end of 16S ribosomal RNA. The polypeptide is Small ribosomal subunit protein uS17 (Xanthomonas axonopodis pv. citri (strain 306)).